We begin with the raw amino-acid sequence, 316 residues long: Tyrosine--tRNA ligase 2 (316 aa).

Tyr26, Tyr146, Gln150, Asp153, and Gln168 together coordinate L-tyrosine. Residues 219–223 carry the 'KMSKS' region motif; sequence KMSKS. Lys222 is a binding site for ATP.

It belongs to the class-I aminoacyl-tRNA synthetase family. TyrS type 4 subfamily. In terms of assembly, homodimer.

It is found in the cytoplasm. It catalyses the reaction tRNA(Tyr) + L-tyrosine + ATP = L-tyrosyl-tRNA(Tyr) + AMP + diphosphate + H(+). Its function is as follows. Catalyzes the attachment of tyrosine to tRNA(Tyr) in a two-step reaction: tyrosine is first activated by ATP to form Tyr-AMP and then transferred to the acceptor end of tRNA(Tyr). This Pyrobaculum aerophilum (strain ATCC 51768 / DSM 7523 / JCM 9630 / CIP 104966 / NBRC 100827 / IM2) protein is Tyrosine--tRNA ligase 2.